Here is a 219-residue protein sequence, read N- to C-terminus: Ribose-5-phosphate isomerase A (219 aa).

Residues 28 to 31 (SGST), 81 to 84 (DGAD), and 94 to 97 (KGGG) contribute to the substrate site. Residue Glu103 is the Proton acceptor of the active site. Lys121 is a substrate binding site.

It belongs to the ribose 5-phosphate isomerase family. In terms of assembly, homodimer.

It carries out the reaction aldehydo-D-ribose 5-phosphate = D-ribulose 5-phosphate. The protein operates within carbohydrate degradation; pentose phosphate pathway; D-ribose 5-phosphate from D-ribulose 5-phosphate (non-oxidative stage): step 1/1. Catalyzes the reversible conversion of ribose-5-phosphate to ribulose 5-phosphate. The sequence is that of Ribose-5-phosphate isomerase A from Actinobacillus pleuropneumoniae serotype 5b (strain L20).